Here is a 171-residue protein sequence, read N- to C-terminus: Glycine cleavage system H protein 4 (171 aa).

The Lipoyl-binding domain maps to 30-112 (FAEVGITDYA…YEAGWIAVIE (83 aa)). Lys-71 carries the post-translational modification N6-lipoyllysine. The disordered stretch occupies residues 139-171 (EKEEEVEVKEEELIETESIEELSEEELGYEENK).

This sequence belongs to the GcvH family. As to quaternary structure, the glycine cleavage system is composed of four proteins: P, T, L and H. Requires (R)-lipoate as cofactor.

Its function is as follows. The glycine cleavage system catalyzes the degradation of glycine. The H protein shuttles the methylamine group of glycine from the P protein to the T protein. This is Glycine cleavage system H protein 4 from Aquifex aeolicus (strain VF5).